A 382-amino-acid chain; its full sequence is Mitogen-activated protein kinase 9 (382 aa).

The region spanning 26-321 (YQQLKPIGSG…VDEALRHPYI (296 aa)) is the Protein kinase domain. Residues 33-38 (GSGAQG) and Lys-55 each bind ATP. Asp-151 acts as the Proton acceptor in catalysis. Thr-183 carries the post-translational modification Phosphothreonine. The short motif at 183 to 185 (TPY) is the TXY element. Tyr-185 is subject to Phosphotyrosine.

Belongs to the protein kinase superfamily. CMGC Ser/Thr protein kinase family. MAP kinase subfamily. Mg(2+) serves as cofactor. In terms of processing, dually phosphorylated on Thr-183 and Tyr-185, which activates the enzyme. In terms of tissue distribution, expressed in the neuroepithelium of developing brain at stages 16 to 26.

The enzyme catalyses L-seryl-[protein] + ATP = O-phospho-L-seryl-[protein] + ADP + H(+). It carries out the reaction L-threonyl-[protein] + ATP = O-phospho-L-threonyl-[protein] + ADP + H(+). Its activity is regulated as follows. Activated by threonine and tyrosine phosphorylation. Its function is as follows. Responds to activation by environmental stress and pro-inflammatory cytokines by phosphorylating a number of transcription factors, primarily components of AP-1 such as JUN and ATF2 and thus regulates AP-1 transcriptional activity. May play a role in the development of the central nervous system during embryogenesis. May play a role in the regulation of the circadian clock. The polypeptide is Mitogen-activated protein kinase 9 (MAPK9) (Gallus gallus (Chicken)).